The primary structure comprises 366 residues: tRNA/tmRNA (uracil-C(5))-methyltransferase (366 aa).

The S-adenosyl-L-methionine site is built by Q190, Y218, N223, E239, and D299. The active-site Nucleophile is C324. The Proton acceptor role is filled by E358.

This sequence belongs to the class I-like SAM-binding methyltransferase superfamily. RNA M5U methyltransferase family. TrmA subfamily.

It carries out the reaction uridine(54) in tRNA + S-adenosyl-L-methionine = 5-methyluridine(54) in tRNA + S-adenosyl-L-homocysteine + H(+). The catalysed reaction is uridine(341) in tmRNA + S-adenosyl-L-methionine = 5-methyluridine(341) in tmRNA + S-adenosyl-L-homocysteine + H(+). Its function is as follows. Dual-specificity methyltransferase that catalyzes the formation of 5-methyluridine at position 54 (m5U54) in all tRNAs, and that of position 341 (m5U341) in tmRNA (transfer-mRNA). In Shigella flexneri serotype 5b (strain 8401), this protein is tRNA/tmRNA (uracil-C(5))-methyltransferase.